Reading from the N-terminus, the 265-residue chain is Phosphatidylserine decarboxylase proenzyme (265 aa).

Active-site charge relay system; for autoendoproteolytic cleavage activity residues include D86, H142, and S226. S226 (schiff-base intermediate with substrate; via pyruvic acid; for decarboxylase activity) is an active-site residue. Position 226 is a pyruvic acid (Ser); by autocatalysis (S226).

The protein belongs to the phosphatidylserine decarboxylase family. PSD-B subfamily. Prokaryotic type I sub-subfamily. In terms of assembly, heterodimer of a large membrane-associated beta subunit and a small pyruvoyl-containing alpha subunit. The cofactor is pyruvate. Post-translationally, is synthesized initially as an inactive proenzyme. Formation of the active enzyme involves a self-maturation process in which the active site pyruvoyl group is generated from an internal serine residue via an autocatalytic post-translational modification. Two non-identical subunits are generated from the proenzyme in this reaction, and the pyruvate is formed at the N-terminus of the alpha chain, which is derived from the carboxyl end of the proenzyme. The autoendoproteolytic cleavage occurs by a canonical serine protease mechanism, in which the side chain hydroxyl group of the serine supplies its oxygen atom to form the C-terminus of the beta chain, while the remainder of the serine residue undergoes an oxidative deamination to produce ammonia and the pyruvoyl prosthetic group on the alpha chain. During this reaction, the Ser that is part of the protease active site of the proenzyme becomes the pyruvoyl prosthetic group, which constitutes an essential element of the active site of the mature decarboxylase.

The protein resides in the cell membrane. The enzyme catalyses a 1,2-diacyl-sn-glycero-3-phospho-L-serine + H(+) = a 1,2-diacyl-sn-glycero-3-phosphoethanolamine + CO2. The protein operates within phospholipid metabolism; phosphatidylethanolamine biosynthesis; phosphatidylethanolamine from CDP-diacylglycerol: step 2/2. Functionally, catalyzes the formation of phosphatidylethanolamine (PtdEtn) from phosphatidylserine (PtdSer). This chain is Phosphatidylserine decarboxylase proenzyme, found in Anoxybacillus flavithermus (strain DSM 21510 / WK1).